An 823-amino-acid chain; its full sequence is Transcription factor SPT20 homolog-like 1 (823 aa).

Disordered stretches follow at residues 246-273 (SVKPQQEQSDCPPPPELRVSTSGQKEER), 369-524 (PRKK…AAQP), 560-601 (GSSF…AVQA), 631-669 (VLTGPQQQSHQLVSLQQLQQPTAAHPPQPGPQGSALGLS), and 720-757 (LRQQQPQPQPPKLQLQPQWQPKPRQEQPQSQQQQPQHI). Residues 423–440 (SHSSSGPASVSQLSSWKT) are compositionally biased toward polar residues. 3 stretches are compositionally biased toward low complexity: residues 469 to 509 (SSSG…QKPS), 568 to 582 (APGSGAPAPAGISGS), and 636 to 650 (QQQSHQLVSLQQLQQ).

It belongs to the SPT20 family.

This chain is Transcription factor SPT20 homolog-like 1 (SUPT20HL1), found in Homo sapiens (Human).